The primary structure comprises 382 residues: D-galactonate dehydratase (382 aa).

Position 183 (D183) interacts with Mg(2+). H185 serves as the catalytic Proton donor. Residues E209 and E235 each contribute to the Mg(2+) site. Catalysis depends on H285, which acts as the Proton acceptor.

Belongs to the mandelate racemase/muconate lactonizing enzyme family. GalD subfamily. The cofactor is Mg(2+).

The enzyme catalyses D-galactonate = 2-dehydro-3-deoxy-D-galactonate + H2O. It participates in carbohydrate acid metabolism; D-galactonate degradation; D-glyceraldehyde 3-phosphate and pyruvate from D-galactonate: step 1/3. Catalyzes the dehydration of D-galactonate to 2-keto-3-deoxy-D-galactonate. In Xanthomonas campestris pv. campestris (strain 8004), this protein is D-galactonate dehydratase.